Reading from the N-terminus, the 615-residue chain is DNA mismatch repair protein MutL (615 aa).

Residues 362–397 form a disordered region; that stretch reads HFAEPAVREPVAPRYSPAPASGGRPAASWPNAQPGY. Positions 378-391 are enriched in low complexity; it reads PAPASGGRPAASWP.

Belongs to the DNA mismatch repair MutL/HexB family.

Functionally, this protein is involved in the repair of mismatches in DNA. It is required for dam-dependent methyl-directed DNA mismatch repair. May act as a 'molecular matchmaker', a protein that promotes the formation of a stable complex between two or more DNA-binding proteins in an ATP-dependent manner without itself being part of a final effector complex. The polypeptide is DNA mismatch repair protein MutL (Escherichia fergusonii (strain ATCC 35469 / DSM 13698 / CCUG 18766 / IAM 14443 / JCM 21226 / LMG 7866 / NBRC 102419 / NCTC 12128 / CDC 0568-73)).